The primary structure comprises 65 residues: Dybowskin-2CDYa (65 aa).

The first 22 residues, 1–22, serve as a signal peptide directing secretion; it reads MFTLKKSLLLLFFIGVIKLSLC. Positions 23 to 47 are excised as a propeptide; that stretch reads EEERNADDDERRDDPDEMDVEVENR. Positions 26 to 43 are enriched in acidic residues; the sequence is RNADDDERRDDPDEMDVE. Residues 26–65 are disordered; the sequence is RNADDDERRDDPDEMDVEVENRSAVGRHGRRFGLRKHRKH. The span at 50–65 shows a compositional bias: basic residues; it reads VGRHGRRFGLRKHRKH.

The protein belongs to the frog skin active peptide (FSAP) family. Brevinin subfamily. In terms of tissue distribution, expressed by the skin glands.

The protein localises to the secreted. Functionally, antimicrobial peptide. Has activity against the Gram-positive bacterium S.aureus (MIC=6 uM) and the Gram-negative bacterium E.coli (MIC=3 uM). Lacks hemolytic activity against human erythrocytes. This is Dybowskin-2CDYa from Rana dybowskii (Dybovsky's frog).